We begin with the raw amino-acid sequence, 335 residues long: Ornithine carbamoyltransferase, catabolic (335 aa).

Carbamoyl phosphate-binding positions include 59–62, Q86, R110, and 137–140; these read STRT and HPTQ. L-ornithine is bound by residues N169, D233, and 237 to 238; that span reads SM. Residues 274 to 275 and R319 contribute to the carbamoyl phosphate site; that span reads CL.

The protein belongs to the aspartate/ornithine carbamoyltransferase superfamily. OTCase family.

It is found in the cytoplasm. It carries out the reaction carbamoyl phosphate + L-ornithine = L-citrulline + phosphate + H(+). It functions in the pathway amino-acid degradation; L-arginine degradation via ADI pathway; carbamoyl phosphate from L-arginine: step 2/2. Its function is as follows. Reversibly catalyzes the transfer of the carbamoyl group from carbamoyl phosphate (CP) to the N(epsilon) atom of ornithine (ORN) to produce L-citrulline. In Bacillus licheniformis (strain ATCC 14580 / DSM 13 / JCM 2505 / CCUG 7422 / NBRC 12200 / NCIMB 9375 / NCTC 10341 / NRRL NRS-1264 / Gibson 46), this protein is Ornithine carbamoyltransferase, catabolic (arcB).